The chain runs to 199 residues: uncharacterized protein (199 aa).

The interval M1–T48 is disordered. S2 is modified (N-acetylserine). Residues Y7–Q21 show a composition bias toward low complexity. The segment covering E22–Q31 has biased composition (polar residues). A phosphoserine mark is found at S53 and S70. The segment at R89–W199 is disordered. 3 stretches are compositionally biased toward gly residues: residues G124 to G163, G170 to G179, and G186 to W199.

The protein resides in the mitochondrion. This is an uncharacterized protein from Saccharomyces cerevisiae (strain ATCC 204508 / S288c) (Baker's yeast).